The primary structure comprises 191 residues: Adenine phosphoribosyltransferase (191 aa).

It belongs to the purine/pyrimidine phosphoribosyltransferase family. Homodimer.

The protein resides in the cytoplasm. The enzyme catalyses AMP + diphosphate = 5-phospho-alpha-D-ribose 1-diphosphate + adenine. It functions in the pathway purine metabolism; AMP biosynthesis via salvage pathway; AMP from adenine: step 1/1. Catalyzes a salvage reaction resulting in the formation of AMP, that is energically less costly than de novo synthesis. The sequence is that of Adenine phosphoribosyltransferase from Nocardia farcinica (strain IFM 10152).